Reading from the N-terminus, the 543-residue chain is MAKDIKFSENARRSLLKGVDKLADTVKTTLGPKGRNVVLEKSYGAPDITNDGVTIAKSIDLKDHFENMGAKLVSEAAQKTNDIAGDGTTTATVLTQAIVREGMKNVTAGANPVGIRRGIETATKAAVDELHKISHKVSTKDEIAQVASVSSASTEVGNLIADAMEKVGHDGVITIEESKGIDTELSVVEGMQFDRGYLSQYMVTDNDKMEADLDNPYILITDKKISNIQDILPLLQEIVQQGKSLLIIADDVDGEALPTLVLNKIRGTFNVVAVKAPGFGDRRKAMLEDIAILTGGTVISSDLGLELKDTKIDQLGKAGKVTVTKDSTTIVEGAGSKDAISERVDQIKKQIADTTSDFDREKLQERLAKLAGGVAVIKVGAATETELKERKYRIEDALNATRAAVEEGYVAGGGTALVDVMKSIQGNVKGDSQDAQTGVNIVMKALGAPVRQIAENAGKDGAVILDHLEHEDPEIGYNAATDKWENMVKAGIIDPTKVTRSALQNAASIAALLLTTEAVVADAPEDDKNQAPAAPNPGMGMGM.

Residues 29–32, 86–90, Gly413, 478–480, and Asp494 contribute to the ATP site; these read TLGP, DGTTT, and NAA.

This sequence belongs to the chaperonin (HSP60) family. Forms a cylinder of 14 subunits composed of two heptameric rings stacked back-to-back. Interacts with the co-chaperonin GroES.

The protein localises to the cytoplasm. The enzyme catalyses ATP + H2O + a folded polypeptide = ADP + phosphate + an unfolded polypeptide.. Together with its co-chaperonin GroES, plays an essential role in assisting protein folding. The GroEL-GroES system forms a nano-cage that allows encapsulation of the non-native substrate proteins and provides a physical environment optimized to promote and accelerate protein folding. In Lactobacillus gasseri (strain ATCC 33323 / DSM 20243 / BCRC 14619 / CIP 102991 / JCM 1131 / KCTC 3163 / NCIMB 11718 / NCTC 13722 / AM63), this protein is Chaperonin GroEL.